The primary structure comprises 110 residues: UPF0145 protein Blon_0093/BLIJ_0092 (110 aa).

It belongs to the UPF0145 family.

This Bifidobacterium longum subsp. infantis (strain ATCC 15697 / DSM 20088 / JCM 1222 / NCTC 11817 / S12) protein is UPF0145 protein Blon_0093/BLIJ_0092.